A 238-amino-acid polypeptide reads, in one-letter code: Succinate dehydrogenase assembly factor 2, mitochondrial (238 aa).

The interval 47-82 (GLKADGSRADQAEAGASQSLDKQSRTLDSVRDDTLS) is disordered. Residues 68 to 80 (KQSRTLDSVRDDT) show a composition bias toward basic and acidic residues.

Belongs to the SDHAF2 family. In terms of assembly, interacts with the flavoprotein subunit within the SDH catalytic dimer.

It localises to the mitochondrion matrix. Functionally, plays an essential role in the assembly of succinate dehydrogenase (SDH), an enzyme complex (also referred to as respiratory complex II) that is a component of both the tricarboxylic acid (TCA) cycle and the mitochondrial electron transport chain, and which couples the oxidation of succinate to fumarate with the reduction of ubiquinone (coenzyme Q) to ubiquinol. Required for flavinylation (covalent attachment of FAD) of the flavoprotein subunit of the SDH catalytic dimer. This Mycosarcoma maydis (Corn smut fungus) protein is Succinate dehydrogenase assembly factor 2, mitochondrial.